The sequence spans 88 residues: Small ribosomal subunit protein bS20 (88 aa).

A disordered region spans residues methionine 1–leucine 28.

This sequence belongs to the bacterial ribosomal protein bS20 family.

Its function is as follows. Binds directly to 16S ribosomal RNA. The chain is Small ribosomal subunit protein bS20 from Streptomyces avermitilis (strain ATCC 31267 / DSM 46492 / JCM 5070 / NBRC 14893 / NCIMB 12804 / NRRL 8165 / MA-4680).